The following is a 616-amino-acid chain: tRNA 5-methylaminomethyl-2-thiouridine biosynthesis bifunctional protein MnmC (616 aa).

Positions 1-232 (MLRTIVPARL…KRHCMSARFA (232 aa)) are tRNA (mnm(5)s(2)U34)-methyltransferase. The FAD-dependent cmnm(5)s(2)U34 oxidoreductase stretch occupies residues 249–616 (IGGGVAGAAA…ARFAGNRKTA (368 aa)).

In the N-terminal section; belongs to the methyltransferase superfamily. tRNA (mnm(5)s(2)U34)-methyltransferase family. The protein in the C-terminal section; belongs to the DAO family. FAD serves as cofactor.

It localises to the cytoplasm. It carries out the reaction 5-aminomethyl-2-thiouridine(34) in tRNA + S-adenosyl-L-methionine = 5-methylaminomethyl-2-thiouridine(34) in tRNA + S-adenosyl-L-homocysteine + H(+). Its function is as follows. Catalyzes the last two steps in the biosynthesis of 5-methylaminomethyl-2-thiouridine (mnm(5)s(2)U) at the wobble position (U34) in tRNA. Catalyzes the FAD-dependent demodification of cmnm(5)s(2)U34 to nm(5)s(2)U34, followed by the transfer of a methyl group from S-adenosyl-L-methionine to nm(5)s(2)U34, to form mnm(5)s(2)U34. The chain is tRNA 5-methylaminomethyl-2-thiouridine biosynthesis bifunctional protein MnmC from Thiobacillus denitrificans (strain ATCC 25259 / T1).